The following is a 492-amino-acid chain: Putative transporter SVOPL (492 aa).

10 helical membrane-spanning segments follow: residues 48-68 (IALF…IMLI), 86-106 (VALV…LFGL), 121-141 (FLWG…IWFV), 179-199 (VFWL…IPTI), 203-223 (WLIR…KFIP), 281-301 (TLQI…VILA), 348-368 (IIST…INFL), 383-403 (LFFL…FLFM), 429-449 (ALGM…APFI), and 458-478 (ILGA…SAFT).

It belongs to the major facilitator superfamily.

The protein localises to the membrane. This chain is Putative transporter SVOPL (SVOPL), found in Homo sapiens (Human).